We begin with the raw amino-acid sequence, 172 residues long: Small ribosomal subunit protein uS5 (172 aa).

One can recognise an S5 DRBM domain in the interval 17–80 (LREKMIAINR…EEARRNLAKI (64 aa)).

It belongs to the universal ribosomal protein uS5 family. As to quaternary structure, part of the 30S ribosomal subunit. Contacts proteins S4 and S8.

In terms of biological role, with S4 and S12 plays an important role in translational accuracy. Its function is as follows. Located at the back of the 30S subunit body where it stabilizes the conformation of the head with respect to the body. This Variovorax paradoxus (strain S110) protein is Small ribosomal subunit protein uS5.